Here is a 494-residue protein sequence, read N- to C-terminus: Neuronal acetylcholine receptor subunit alpha-6 (494 aa).

The first 30 residues, 1–30 (MLNSRDQGNLHSGLCLWLCGFLALFKGSTG), serve as a signal peptide directing secretion. Over 31–240 (CESEEQLFHR…TYSFYIRRLP (210 aa)) the chain is Extracellular. Residues Asn-54 and Asn-171 are each glycosylated (N-linked (GlcNAc...) asparagine). Intrachain disulfides connect Cys-158-Cys-172 and Cys-222-Cys-223. Helical transmembrane passes span 241–265 (MFYT…FYLP), 272–290 (VTLC…LVIT), and 306–327 (YLLF…VLNI). The Cytoplasmic segment spans residues 328-465 (HYRTPATHTM…WKYMAMVVDR (138 aa)). Residues 399–423 (QKSSDIAPGKRRSSQQPARWVAENS) are disordered. Residue Ser-401 is modified to Phosphoserine. Residues 466 to 485 (VFLWVFIIVCVFGTVGLFLQ) form a helical membrane-spanning segment.

This sequence belongs to the ligand-gated ion channel (TC 1.A.9) family. Acetylcholine receptor (TC 1.A.9.1) subfamily. Alpha-6/CHRNA6 sub-subfamily. In terms of assembly, neuronal AChR is composed of two different types of subunits: alpha and non-alpha (beta). CHRNA6/alpha-6 subunit can be combined to CHRNB2/beta-2 and CHRNA4/alpha-4 to give rise to functional receptors. Interacts with LYPD6. Predominantly expressed in only a few brain areas, including dopaminergic neurons, norepirephrine neurons and cells of the visual system.

It localises to the synaptic cell membrane. The enzyme catalyses K(+)(in) = K(+)(out). The catalysed reaction is Na(+)(in) = Na(+)(out). It carries out the reaction Ca(2+)(in) = Ca(2+)(out). With respect to regulation, activated by a myriad of ligands such as acetylcholine, cytisine and nicotine. CHRNA6 nAChR activity is inhibited by the antagonists alpha-conotoxin MII and PIA, a small disulfide-constrained peptides from cone snails. Component of neuronal acetylcholine receptors (nAChRs) that function as pentameric, ligand-gated cation channels with high calcium permeability among other activities. nAChRs are excitatory neurotrasnmitter receptors formed by a collection of nAChR subunits known to mediate synaptic transmission in the nervous system and the neuromuscular junction. Each nAchR subunit confers differential attributes to channel properties, including activation, deactivation and desensitization kinetics, pH sensitivity, cation permeability, and binding to allosteric modulators. CHRNA6 forms pentameric channels with CHRNB2 and CHRNA4 that exhibit high sensitivity to ACh and nicotine and are predominantly expressed in only a few brain areas, including dopaminergic neurons, norepirephrine neurons and cells of the visual system. nAChrs containing CHRNA6 subunits mediate endogenous cholinergic modulation of dopamine and gamma-aminobutyric acid (GABA) release in response to nicotine at nerve terminals. This is Neuronal acetylcholine receptor subunit alpha-6 (Chrna6) from Mus musculus (Mouse).